A 752-amino-acid chain; its full sequence is Palmitoyltransferase AKR1 (752 aa).

Disordered regions lie at residues 1-21 (MTAEEVDKESDPAIEDVKSDY) and 49-68 (ASSELKHENDQGEERDLGSV). Topologically, residues 1 to 318 (MTAEEVDKES…FPLPQYFSAS (318 aa)) are cytoplasmic. Basic and acidic residues-rich tracts occupy residues 9-21 (ESDPAIEDVKSDY) and 51-68 (SELKHENDQGEERDLGSV). ANK repeat units follow at residues 72–102 (PILERYHAACKQGDMKTLREMVESKVIDLSN), 108–137 (ERVSGLHWACINNRLSAVKYLAGAGAEVNF), 142–171 (LDATPLHWASKSGLVYIVDELLKAGADPNI), 175–208 (QGYNLLHTSVFSSNIMLVIYVLFFVVDGKEDVDQ), 212–241 (HQRTALQWATYQADALTVENLLKFNADVKN), and 245–274 (AGFTALHWGTVKGSIPVMDLLIKHGSDFFQ). The helical transmembrane segment at 319–339 (TGKMLTFFLPWVLIPLVFYIF) threads the bilayer. Over 340 to 341 (SK) the chain is Lumenal. The chain crosses the membrane as a helical span at residues 342–362 (ITFFIALLINTIVLVISGLVL). Residues 363–380 (SRLVVPSYLLSKRHPILN) are Cytoplasmic-facing. Residues 381–401 (SPLLAGILSGTIAIAFFIWFT) form a helical membrane-spanning segment. Over 402-412 (KISILTFTEKP) the chain is Lumenal. A helical transmembrane segment spans residues 413-433 (VGNIIMLGFFIGLITLFIGLM). Over 434-509 (KSDPGYIPGT…YNQIGLLNHK (76 aa)) the chain is Cytoplasmic. The region spanning 466–516 (HFCVHTWIRIPLRSKYDRDSACLISAFDHFCPWVYNQIGLLNHKLFYMFVV) is the DHHC domain. Cys496 (S-palmitoyl cysteine intermediate) is an active-site residue. The chain crosses the membrane as a helical span at residues 510–530 (LFYMFVVLLEISVWWFLPLMM). Over 531-567 (EYFDELEDYLENRKGKHFGDCHFLGDEDLCFGLHHDT) the chain is Lumenal. Residues 568-588 (FNFLLLCWVIFQAFWVLCLIA) traverse the membrane as a helical segment. Residues 589–752 (VQTVQMLKGV…TLPNATEELV (164 aa)) are Cytoplasmic-facing.

It belongs to the DHHC palmitoyltransferase family. AKR/ZDHHC17 subfamily.

The protein resides in the early endosome membrane. It is found in the golgi apparatus membrane. The enzyme catalyses L-cysteinyl-[protein] + hexadecanoyl-CoA = S-hexadecanoyl-L-cysteinyl-[protein] + CoA. Functionally, palmitoyltransferase specific for casein kinase 1. This chain is Palmitoyltransferase AKR1 (AKR1), found in Kluyveromyces lactis (strain ATCC 8585 / CBS 2359 / DSM 70799 / NBRC 1267 / NRRL Y-1140 / WM37) (Yeast).